The chain runs to 443 residues: 26S proteasome regulatory subunit 4 homolog B (443 aa).

2 disordered regions span residues 1-55 (MGQG…LPTV) and 87-108 (RLKPQEEKAEEDRSKVDDLRGT). Basic and acidic residues-rich tracts occupy residues 12-28 (QGDRKPDGGEKKEKKFE) and 87-106 (RLKPQEEKAEEDRSKVDDLR). ATP is bound at residue 229–236 (GEPGTGKT). Residues K296 and K433 each participate in a glycyl lysine isopeptide (Lys-Gly) (interchain with G-Cter in ubiquitin) cross-link.

The protein belongs to the AAA ATPase family. In terms of assembly, component of the 19S regulatory particle (RP/PA700) base subcomplex of the 26S proteasome. The 26S proteasome is composed of a core protease (CP), known as the 20S proteasome, capped at one or both ends by the 19S regulatory particle (RP/PA700). The RP/PA700 complex is composed of at least 17 different subunits in two subcomplexes, the base and the lid, which form the portions proximal and distal to the 20S proteolytic core, respectively. Preferentially expressed in the root and shoot apical meristem.

The protein localises to the cytoplasm. It is found in the nucleus. Functionally, the 26S protease is involved in the ATP-dependent degradation of ubiquitinated proteins. The regulatory (or ATPase) complex confers ATP dependency and substrate specificity to the 26S complex. Acts redundantly with RPT2A in the regulation of gametogenesis. With RPT2A plays a critical role in 26S proteasome assembly. The chain is 26S proteasome regulatory subunit 4 homolog B from Arabidopsis thaliana (Mouse-ear cress).